Consider the following 438-residue polypeptide: Tol-Pal system protein TolB (438 aa).

The signal sequence occupies residues 1-21; that stretch reads MVKRSLLVLALLICLPATLFA.

The protein belongs to the TolB family. As to quaternary structure, the Tol-Pal system is composed of five core proteins: the inner membrane proteins TolA, TolQ and TolR, the periplasmic protein TolB and the outer membrane protein Pal. They form a network linking the inner and outer membranes and the peptidoglycan layer.

The protein resides in the periplasm. Part of the Tol-Pal system, which plays a role in outer membrane invagination during cell division and is important for maintaining outer membrane integrity. This chain is Tol-Pal system protein TolB, found in Desulfosudis oleivorans (strain DSM 6200 / JCM 39069 / Hxd3) (Desulfococcus oleovorans).